We begin with the raw amino-acid sequence, 148 residues long: Large ribosomal subunit protein bL9 (148 aa).

The protein belongs to the bacterial ribosomal protein bL9 family.

Its function is as follows. Binds to the 23S rRNA. The chain is Large ribosomal subunit protein bL9 from Desulfitobacterium hafniense (strain DSM 10664 / DCB-2).